The sequence spans 206 residues: 7-methyl-GTP pyrophosphatase (206 aa).

The Proton acceptor role is filled by Asp82.

It belongs to the Maf family. YceF subfamily. A divalent metal cation serves as cofactor.

The protein localises to the cytoplasm. The catalysed reaction is N(7)-methyl-GTP + H2O = N(7)-methyl-GMP + diphosphate + H(+). In terms of biological role, nucleoside triphosphate pyrophosphatase that hydrolyzes 7-methyl-GTP (m(7)GTP). May have a dual role in cell division arrest and in preventing the incorporation of modified nucleotides into cellular nucleic acids. In Shewanella denitrificans (strain OS217 / ATCC BAA-1090 / DSM 15013), this protein is 7-methyl-GTP pyrophosphatase.